Here is an 800-residue protein sequence, read N- to C-terminus: MSSHIVTPGPYRATKLWNEVTKLFRAGMPLKKHRQHFRVYTNCFTASTAVDWLHELLKNNSNFGPDVTRQQTVQLLKKFLKNHVIEDVKGRWGMEDLEDNSQLYRFPSTSPLKPIPNRPTVMRRKSLSMMDRESFFKFRGSKKFDKETLENVDPETQESPVGSSSGETERSRELTEDDIHVIWKNVTLTHLQKLVGSASLEGVLDPAKVNPQFIVYNMTKVNKHGVVSLEDKTEDLPHWALSAMKCLANWPKYDSDQPTYLGFERDVFKTVSDYFYSLPQPLLTYQYYELFVNILVMCGYITTPKSQPGKRKNQEEPNCPQPAKNPYVNPANLFRSTEYLLLSLIRKEAIDEADSPMKEVFSSKTETKLDTRRVFRGRRVSDGDRLDGSYLDVSQAHKTDVPYGRLRPRSCSLEGNINNCAKSRLFRSSESLESCSSDKSNPETDSPLEPNLQSSLVSINTSGSSVSSQLSADLRRNNSRPARARPRSIGNLFDIEENREMSASSFSVHAPVAEITMRPDSTSSVGFRGLGLSSLHGSCVDVRTGPSFSRRCQSSLDLSKPAPARPPSALLTHQPEQSLLQPSLEQVAVEALQLCTLLLPPASRRKLQLLLRMISRMSQNVDMPRLHDVIGTRTLLVQTFSRCVLSCEEVDDLDELLATRLLSFLMDHHQEVLQVPVYLRNAVEDHINYLKSLSSCPGSAGPIPSYSFCRQISCQEFEQQKLSVSQSALADLLENIIKDKSMSVKEKKKKIKLFQKEYPDIYSRRFPTTESETQLFADKPKIKPPMLLSIKKAKTFSIRN.

In terms of domain architecture, DEP spans 24–108 (FRAGMPLKKH…DNSQLYRFPS (85 aa)). 3 disordered regions span residues 147–173 (ETLE…RSRE), 306–326 (SQPG…AKNP), and 459–485 (INTS…ARAR). Positions 281–321 (PLLTYQYYELFVNILVMCGYITTPKSQPGKRKNQEEPNCPQ) constitute a Rho-GAP domain. Residues 459–468 (INTSGSSVSS) show a composition bias toward low complexity.

This is DEP domain-containing protein 1A (depdc1a) from Danio rerio (Zebrafish).